The chain runs to 241 residues: Large ribosomal subunit protein uL3 (241 aa).

2 disordered regions span residues 140 to 162 (SHRS…NKKM) and 217 to 241 (PLPG…EETA). An N5-methylglutamine modification is found at Gln-151. Over residues 229 to 241 (APATEAPAAEETA) the composition is skewed to low complexity.

It belongs to the universal ribosomal protein uL3 family. As to quaternary structure, part of the 50S ribosomal subunit. Forms a cluster with proteins L14 and L19. In terms of processing, methylated by PrmB.

Functionally, one of the primary rRNA binding proteins, it binds directly near the 3'-end of the 23S rRNA, where it nucleates assembly of the 50S subunit. This Methylobacterium radiotolerans (strain ATCC 27329 / DSM 1819 / JCM 2831 / NBRC 15690 / NCIMB 10815 / 0-1) protein is Large ribosomal subunit protein uL3.